A 313-amino-acid polypeptide reads, in one-letter code: D-alanine--D-alanine ligase (313 aa).

One can recognise an ATP-grasp domain in the interval Lys-108–Ser-308. An ATP-binding site is contributed by Val-138–Tyr-193. Residues Asp-262, Glu-275, and Asn-277 each contribute to the Mg(2+) site.

This sequence belongs to the D-alanine--D-alanine ligase family. Mg(2+) serves as cofactor. Mn(2+) is required as a cofactor.

The protein resides in the cytoplasm. The enzyme catalyses 2 D-alanine + ATP = D-alanyl-D-alanine + ADP + phosphate + H(+). It functions in the pathway cell wall biogenesis; peptidoglycan biosynthesis. Functionally, cell wall formation. The protein is D-alanine--D-alanine ligase of Burkholderia vietnamiensis (strain G4 / LMG 22486) (Burkholderia cepacia (strain R1808)).